The primary structure comprises 194 residues: NAD(P)H:quinone oxidoreductase (194 aa).

Belongs to the SsuE family. As to quaternary structure, homotetramer. FMN is required as a cofactor.

The catalysed reaction is a quinone + NADH + H(+) = a quinol + NAD(+). The enzyme catalyses a quinone + NADPH + H(+) = a quinol + NADP(+). Functionally, the enzyme apparently serves as a quinone reductase in connection with conjugation reactions of hydroquinones involved in detoxification pathways. The protein is NAD(P)H:quinone oxidoreductase of Solanum tuberosum (Potato).